The sequence spans 48 residues: uncharacterized protein (48 aa).

This is an uncharacterized protein from Dictyostelium discoideum (Social amoeba).